The following is a 72-amino-acid chain: Translation initiation factor IF-1 (72 aa).

Positions 1–72 (MSKEGKITLK…TRGRIIYRIS (72 aa)) constitute an S1-like domain.

Belongs to the IF-1 family. Component of the 30S ribosomal translation pre-initiation complex which assembles on the 30S ribosome in the order IF-2 and IF-3, IF-1 and N-formylmethionyl-tRNA(fMet); mRNA recruitment can occur at any time during PIC assembly.

Its subcellular location is the cytoplasm. In terms of biological role, one of the essential components for the initiation of protein synthesis. Stabilizes the binding of IF-2 and IF-3 on the 30S subunit to which N-formylmethionyl-tRNA(fMet) subsequently binds. Helps modulate mRNA selection, yielding the 30S pre-initiation complex (PIC). Upon addition of the 50S ribosomal subunit IF-1, IF-2 and IF-3 are released leaving the mature 70S translation initiation complex. The chain is Translation initiation factor IF-1 from Malacoplasma penetrans (strain HF-2) (Mycoplasma penetrans).